The chain runs to 338 residues: Malate dehydrogenase, mitochondrial (338 aa).

A mitochondrion-targeting transit peptide spans 1 to 24; it reads MLSALARPVGAALRRSFSTSAQNN. NAD(+)-binding positions include 31–37 and D57; that span reads GASGGIG. S33 is a glycosylation site (O-linked (GlcNAc) serine). An N6-acetyllysine; alternate mark is found at K78 and K91. K78 and K91 each carry N6-succinyllysine; alternate. Positions 104 and 110 each coordinate substrate. NAD(+) contacts are provided by residues N117 and 140-142; that span reads ISN. N142 serves as a coordination point for substrate. N6-acetyllysine is present on K165. R176 contributes to the substrate binding site. K185 carries the post-translational modification N6-acetyllysine; alternate. At K185 the chain carries N6-succinyllysine; alternate. The active-site Proton acceptor is H200. At K203 the chain carries N6-succinyllysine. K215 and K239 each carry N6-acetyllysine; alternate. Residues K215 and K239 each carry the N6-succinyllysine; alternate modification. K239 is subject to N6-malonyllysine; alternate. S246 carries the phosphoserine modification. Residue M251 participates in NAD(+) binding. N6-succinyllysine is present on K269. K296, K301, K307, K314, and K324 each carry N6-acetyllysine; alternate. 5 positions are modified to N6-succinyllysine; alternate: K296, K301, K307, K314, and K324. K307 is modified (N6-malonyllysine; alternate). S326 carries the phosphoserine modification. N6-acetyllysine; alternate is present on residues K328, K329, and K335. The residue at position 328 (K328) is an N6-succinyllysine; alternate. Position 329 is an N6-malonyllysine; alternate (K329). At K335 the chain carries N6-succinyllysine; alternate.

This sequence belongs to the LDH/MDH superfamily. MDH type 1 family. In terms of assembly, homodimer. Acetylation is enhanced after treatment either with trichostin A (TCA) or with nicotinamide (NAM) with the appearance of tri- and tetraacetylations. Glucose also increases acetylation. In terms of tissue distribution, expressed in flagella of epididymal sperm.

It localises to the mitochondrion matrix. It catalyses the reaction (S)-malate + NAD(+) = oxaloacetate + NADH + H(+). With respect to regulation, enzyme activity is enhanced by acetylation. This Rattus norvegicus (Rat) protein is Malate dehydrogenase, mitochondrial (Mdh2).